A 284-amino-acid polypeptide reads, in one-letter code: MLSKQIPLGIYEKALPAGECWLERLQLAKTLGFDFVEMSVDETDERLSRLDWSREQRLALVNAIVETGVRVPSMCLSAHRRFPLGSEDDAVRAQGLEIMRKAIQFAQDVGIRVIQLAGYDVYYQEANNETRRRFRDGLKESVEMASRAQVTLAVEIMDYPLMNSISKALGYAHYLNNPWFQLYPDIGNLSAWDNDVQMELQAGIGHIVAVHVKDTKPGVFKNVPFGEGVVDFERCFETLKQSGYCGPYLIEMWSETAEDPAAEVAKARDWVKARMAKAGMVEAA.

Belongs to the L-ribulose-5-phosphate 3-epimerase family.

The catalysed reaction is L-ribulose 5-phosphate = L-xylulose 5-phosphate. Its pathway is cofactor degradation; L-ascorbate degradation; D-xylulose 5-phosphate from L-ascorbate: step 3/4. Its function is as follows. Catalyzes the isomerization of L-xylulose-5-phosphate to L-ribulose-5-phosphate. Is involved in the anaerobic L-ascorbate utilization. In Escherichia coli O157:H7 (strain EC4115 / EHEC), this protein is L-ribulose-5-phosphate 3-epimerase UlaE.